The following is a 465-amino-acid chain: UDP-N-acetylmuramate--L-alanine ligase (465 aa).

112 to 118 is an ATP binding site; that stretch reads GTHGKTT.

This sequence belongs to the MurCDEF family.

It is found in the cytoplasm. It catalyses the reaction UDP-N-acetyl-alpha-D-muramate + L-alanine + ATP = UDP-N-acetyl-alpha-D-muramoyl-L-alanine + ADP + phosphate + H(+). It functions in the pathway cell wall biogenesis; peptidoglycan biosynthesis. Its function is as follows. Cell wall formation. The protein is UDP-N-acetylmuramate--L-alanine ligase of Burkholderia mallei (strain NCTC 10247).